A 185-amino-acid polypeptide reads, in one-letter code: Translation initiation factor IF-3 (185 aa).

The protein belongs to the IF-3 family. Monomer.

It localises to the cytoplasm. IF-3 binds to the 30S ribosomal subunit and shifts the equilibrium between 70S ribosomes and their 50S and 30S subunits in favor of the free subunits, thus enhancing the availability of 30S subunits on which protein synthesis initiation begins. This chain is Translation initiation factor IF-3, found in Streptococcus pneumoniae serotype 19F (strain G54).